The primary structure comprises 505 residues: Trans-cinnamate 4-monooxygenase (505 aa).

The helical transmembrane segment at 3-23 (LLLLEKTLLALFLAAITAITI) threads the bilayer. (E)-cinnamate contacts are provided by residues 213–218 (RSRLAQ) and alanine 306. Cysteine 447 contacts heme.

It belongs to the cytochrome P450 family. Heme is required as a cofactor.

The protein localises to the membrane. The catalysed reaction is (E)-cinnamate + reduced [NADPH--hemoprotein reductase] + O2 = (E)-4-coumarate + oxidized [NADPH--hemoprotein reductase] + H2O + H(+). It participates in phenylpropanoid metabolism; trans-4-coumarate biosynthesis; trans-4-coumarate from trans-cinnamate: step 1/1. Catalyzes the first oxidative step of the phenylpropanoid pathway in higher plants by transforming trans-cinnamate into p-coumarate. The compounds formed by this pathway are essential components for lignification, pollination, and defense against ultraviolet light, predators and pathogens. This is Trans-cinnamate 4-monooxygenase (CYP73A9) from Pisum sativum (Garden pea).